Reading from the N-terminus, the 661-residue chain is Transcription factor ccg-8 (661 aa).

Residues M1–H11 are compositionally biased toward basic residues. Disordered regions lie at residues M1–N69, S107–P243, L255–Q279, and R354–S398. Composition is skewed to low complexity over residues H23–Q43 and S107–R140. Residues D173–S187 show a composition bias toward polar residues. The span at Q192–F203 shows a compositional bias: pro residues. Positions S357–Q366 are enriched in basic and acidic residues.

Transcription factor that plays a pivotal role in azole adaptive responses by regulating the drug accumulation in the cells. Affects the transcriptional responses to ketoconazole of many genes, including the target gene (erg11), an azole transporter gene (cdr4), a hexose transporter gene (hxt13), a stress response gene (kts-1), two transcription factor genes (named kts-2 and fsd-1/ndt80). Also regulates phospholipid synthesis that is not involved in azole resistance. The protein is Transcription factor ccg-8 of Neurospora crassa (strain ATCC 24698 / 74-OR23-1A / CBS 708.71 / DSM 1257 / FGSC 987).